The sequence spans 428 residues: Glutamate-1-semialdehyde 2,1-aminomutase (428 aa).

At K267 the chain carries N6-(pyridoxal phosphate)lysine.

The protein belongs to the class-III pyridoxal-phosphate-dependent aminotransferase family. HemL subfamily. As to quaternary structure, homodimer. Pyridoxal 5'-phosphate is required as a cofactor.

The protein resides in the cytoplasm. It carries out the reaction (S)-4-amino-5-oxopentanoate = 5-aminolevulinate. It participates in porphyrin-containing compound metabolism; protoporphyrin-IX biosynthesis; 5-aminolevulinate from L-glutamyl-tRNA(Glu): step 2/2. In Sulfurihydrogenibium sp. (strain YO3AOP1), this protein is Glutamate-1-semialdehyde 2,1-aminomutase.